A 2839-amino-acid polypeptide reads, in one-letter code: PDZ domain-containing protein 2 (2839 aa).

One can recognise a PDZ 1 domain in the interval 85 to 182 (LSFGNIPVFG…LIMLRRFKHK (98 aa)). The tract at residues 185-318 (STYNGNSSNS…RFSKGGKTDF (134 aa)) is disordered. A compositionally biased stretch (low complexity) spans 189–202 (GNSSNSSEPGETPT). A compositionally biased stretch (basic and acidic residues) spans 280 to 296 (HLERSEVDRGTEHRIPK). Residues 334–419 (KMELLKESDG…MVQLVVASKE (86 aa)) enclose the PDZ 2 domain. Positions 437 to 447 (TSSVEDVSSWT) are enriched in polar residues. Residues 437 to 501 (TSSVEDVSSW…PKQGSNKIKL (65 aa)) are disordered. Positions 448–461 (DNEDQEADGEEDEG) are enriched in acidic residues. A Phosphoserine modification is found at serine 568. The 87-residue stretch at 586–672 (IIGLYKEKGK…GLFVLTVRTK (87 aa)) folds into the PDZ 3 domain. A compositionally biased stretch (polar residues) spans 678 to 697 (LTPCSTPTHMSRSASPNFNT). Residues 678–723 (LTPCSTPTHMSRSASPNFNTSGGASAGGSDEGSSSSLGRKTPGPKD) are disordered. Positions 728 to 813 (EVTLNKEPRV…GPVRLVIGRH (86 aa)) constitute a PDZ 4 domain. Composition is skewed to polar residues over residues 832–843 (YQESKEANSSPG) and 894–908 (GCST…PSTS). Disordered stretches follow at residues 832-852 (YQES…KSPS) and 879-921 (DFMV…ANSL). 2 positions are modified to phosphoserine: serine 944 and serine 948. 14 disordered regions span residues 984-1033 (SLPG…ISAP), 1062-1155 (SAEA…PCDL), 1216-1493 (KAAS…GAPA), 1530-1620 (FHED…LPTQ), 1638-1712 (PRES…SPLS), 1809-1865 (NQGT…DLSK), 1892-1976 (GKAK…SVSD), 2009-2079 (PDRG…GNIM), 2135-2166 (QVAE…SMAK), 2178-2211 (IRKA…GEDH), 2232-2251 (HFGR…DSQV), 2353-2383 (AKSG…GSLG), 2426-2481 (SRQN…SRSK), and 2516-2564 (ITPR…GEAA). The segment covering 1012-1022 (MDVHNQEERPR) has biased composition (basic and acidic residues). Polar residues-rich tracts occupy residues 1092–1111 (RTDT…QQKS), 1138–1147 (SGSQTVNLTG), 1221–1236 (LGQQ…SDLI), 1250–1269 (SKTS…SQPA), 1305–1315 (TRSASETSTPH), 1384–1401 (SVSS…PSTD), and 1440–1453 (RSPS…GSQE). The segment covering 1662 to 1672 (SSQPSSLLEMS) has biased composition (low complexity). Residues 1698–1711 (EVTSASSAMENSPL) are compositionally biased toward polar residues. At serine 1850 the chain carries Phosphoserine. Positions 1919 to 1931 (SPQTSHKTLSKAV) are enriched in polar residues. Over residues 1936–1945 (HVADHEDPDR) the composition is skewed to basic and acidic residues. Positions 2139 to 2152 (SSTSHPSSLPSHAS) are enriched in low complexity. Residues 2370–2383 (GRRSSGSIVSGSLG) show a composition bias toward low complexity. 3 stretches are compositionally biased toward polar residues: residues 2426 to 2437 (SRQNPPETSSKG), 2470 to 2480 (RHTQPSPVSRS), and 2546 to 2559 (PKTS…SASD). A PDZ 5 domain is found at 2622–2706 (FIVLNRKEGS…HKDALVVIKK (85 aa)). The segment at 2709-2729 (DQPRPSARQEPPTANGKGLLS) is disordered. In terms of domain architecture, PDZ 6 spans 2750–2835 (CVEVLKTSAG…GPVQLLIRKH (86 aa)).

In terms of assembly, interacts with SCN10A, CTNND2 and PKP4. A secreted form is produced by caspase-mediated proteolytic cleavage. In terms of tissue distribution, isoform 2 is expressed (at protein level) in prostate and many prostate tumors.

It is found in the nucleus. The protein localises to the cytoplasm. It localises to the endoplasmic reticulum. Its subcellular location is the secreted. This chain is PDZ domain-containing protein 2 (PDZD2), found in Homo sapiens (Human).